The primary structure comprises 64 residues: Putative H/ACA ribonucleoprotein complex subunit 3 (64 aa).

The protein belongs to the NOP10 family. As to quaternary structure, component of the small nucleolar ribonucleoprotein particles containing H/ACA-type snoRNAs (H/ACA snoRNPs).

The protein resides in the nucleus. It localises to the nucleolus. Required for ribosome biogenesis. Part of a complex which catalyzes pseudouridylation of rRNA. This involves the isomerization of uridine such that the ribose is subsequently attached to C5, instead of the normal N1. Pseudouridine ('psi') residues may serve to stabilize the conformation of rRNAs. This chain is Putative H/ACA ribonucleoprotein complex subunit 3 (nola-3), found in Caenorhabditis elegans.